A 395-amino-acid polypeptide reads, in one-letter code: Phosphopentomutase (395 aa).

6 residues coordinate Mn(2+): aspartate 14, aspartate 289, histidine 294, aspartate 330, histidine 331, and histidine 342.

It belongs to the phosphopentomutase family. Mn(2+) is required as a cofactor.

The protein resides in the cytoplasm. The catalysed reaction is 2-deoxy-alpha-D-ribose 1-phosphate = 2-deoxy-D-ribose 5-phosphate. It catalyses the reaction alpha-D-ribose 1-phosphate = D-ribose 5-phosphate. It functions in the pathway carbohydrate degradation; 2-deoxy-D-ribose 1-phosphate degradation; D-glyceraldehyde 3-phosphate and acetaldehyde from 2-deoxy-alpha-D-ribose 1-phosphate: step 1/2. In terms of biological role, isomerase that catalyzes the conversion of deoxy-ribose 1-phosphate (dRib-1-P) and ribose 1-phosphate (Rib-1-P) to deoxy-ribose 5-phosphate (dRib-5-P) and ribose 5-phosphate (Rib-5-P), respectively. The protein is Phosphopentomutase of Mycoplasmopsis pulmonis (strain UAB CTIP) (Mycoplasma pulmonis).